We begin with the raw amino-acid sequence, 139 residues long: Ribosome maturation factor RimP (139 aa).

It belongs to the RimP family.

The protein resides in the cytoplasm. Functionally, required for maturation of 30S ribosomal subunits. This is Ribosome maturation factor RimP from Syntrophomonas wolfei subsp. wolfei (strain DSM 2245B / Goettingen).